We begin with the raw amino-acid sequence, 388 residues long: Muscleblind-like protein 1 (388 aa).

Thr6 is modified (phosphothreonine). 4 C3H1-type zinc fingers span residues 13-41, 47-73, 179-207, and 215-241; these read WLTL…HPSK, NGRV…HPPP, TDRL…HPAD, and DNTV…HPPA.

The protein belongs to the muscleblind family. As to quaternary structure, interacts with DDX1 and YBX1. Interacts with HNRNPH1; the interaction in RNA-independent. Interacts with RBPMS; the interaction allows cooperative assembly of RNA-bound stable cell-specific alternative splicing regulatory complexes. In terms of tissue distribution, highly expressed in cardiac, skeletal muscle and during myoblast differentiation. Weakly expressed in other tissues (at protein level). Expressed in heart, brain, placenta, lung, liver, skeletal muscle, kidney and pancreas.

It localises to the nucleus. The protein localises to the cytoplasm. Its subcellular location is the cytoplasmic granule. Mediates pre-mRNA alternative splicing regulation. Acts either as activator or repressor of splicing on specific pre-mRNA targets. Inhibits cardiac troponin-T (TNNT2) pre-mRNA exon inclusion but induces insulin receptor (IR) pre-mRNA exon inclusion in muscle. Antagonizes the alternative splicing activity pattern of CELF proteins. Regulates the TNNT2 exon 5 skipping through competition with U2AF2. Inhibits the formation of the spliceosome A complex on intron 4 of TNNT2 pre-mRNA. Binds to the stem-loop structure within the polypyrimidine tract of TNNT2 intron 4 during spliceosome assembly. Binds to the 5'-YGCU(U/G)Y-3'consensus sequence. Binds to the IR RNA. Binds to expanded CUG repeat RNA, which folds into a hairpin structure containing GC base pairs and bulged, unpaired U residues. Together with RNA binding proteins RBPMS and RBFOX2, activates vascular smooth muscle cells alternative splicing events. Regulates NCOR2 alternative splicing. In Homo sapiens (Human), this protein is Muscleblind-like protein 1 (MBNL1).